The primary structure comprises 606 residues: NADH-ubiquinone oxidoreductase chain 5 (606 aa).

N-formylmethionine is present on Met-1. 15 helical membrane-spanning segments follow: residues 4–24, 43–63, 87–107, 117–137, 140–160, 171–191, 213–233, 241–261, 273–293, 310–330, 366–386, 413–433, 457–477, 482–502, and 582–602; these read FSSL…MMSF, AFIT…ELII, MMFI…SMWY, FFKY…ANNL, LFIG…WWYG, AILY…WFLT, LIGL…HPWL, TPVS…FLLI, IQSI…MCAL, LGLM…LHIC, MPFT…MPFL, LIAT…ALLG, LLIG…PTTI, MPYY…ILAL, and GLIK…MILF.

As to quaternary structure, core subunit of respiratory chain NADH dehydrogenase (Complex I) which is composed of 45 different subunits.

The protein resides in the mitochondrion inner membrane. The enzyme catalyses a ubiquinone + NADH + 5 H(+)(in) = a ubiquinol + NAD(+) + 4 H(+)(out). Functionally, core subunit of the mitochondrial membrane respiratory chain NADH dehydrogenase (Complex I) which catalyzes electron transfer from NADH through the respiratory chain, using ubiquinone as an electron acceptor. Essential for the catalytic activity and assembly of complex I. The chain is NADH-ubiquinone oxidoreductase chain 5 (MT-ND5) from Bos taurus (Bovine).